A 261-amino-acid chain; its full sequence is Hemin import ATP-binding protein HmuV (261 aa).

Residues 5–241 (LTANAASFAI…DLLARVFDVD (237 aa)) form the ABC transporter domain. Residue 37 to 44 (GPNGAGKS) participates in ATP binding.

The protein belongs to the ABC transporter superfamily. Heme (hemin) importer (TC 3.A.1.14.5) family. In terms of assembly, the complex is composed of two ATP-binding proteins (HmuV), two transmembrane proteins (HmuU) and a solute-binding protein (HmuT).

The protein resides in the cell inner membrane. Part of the ABC transporter complex HmuTUV involved in hemin import. Responsible for energy coupling to the transport system. The polypeptide is Hemin import ATP-binding protein HmuV (Rhodopseudomonas palustris (strain BisB5)).